A 107-amino-acid polypeptide reads, in one-letter code: U1-lycotoxin-Ls1s (107 aa).

An N-terminal signal peptide occupies residues 1-20 (MMKVLVVVALLVTLISYSSS). A propeptide spanning residues 21-41 (EGIDDLEADELLSLMANEQTR) is cleaved from the precursor. Intrachain disulfides connect Cys44/Cys59, Cys51/Cys68, Cys58/Cys86, and Cys70/Cys84.

This sequence belongs to the neurotoxin 19 (CSTX) family. 04 (U1-Lctx) subfamily. In terms of tissue distribution, expressed by the venom gland.

The protein resides in the secreted. This chain is U1-lycotoxin-Ls1s, found in Lycosa singoriensis (Wolf spider).